The sequence spans 248 residues: Cell division protein ZapD (248 aa).

Belongs to the ZapD family. In terms of assembly, interacts with FtsZ.

It localises to the cytoplasm. Its function is as follows. Cell division factor that enhances FtsZ-ring assembly. Directly interacts with FtsZ and promotes bundling of FtsZ protofilaments, with a reduction in FtsZ GTPase activity. The sequence is that of Cell division protein ZapD from Aliivibrio salmonicida (strain LFI1238) (Vibrio salmonicida (strain LFI1238)).